Reading from the N-terminus, the 552-residue chain is WAP, Kazal, immunoglobulin, Kunitz and NTR domain-containing protein 1 (552 aa).

Positions 1-25 (MPAPQPLLPLLFAFVLIHLTSETNL) are cleaved as a signal peptide. The WAP domain occupies 29–82 (PGSHPGMCPNQLSPHLWVDAQSTCERECTRDQDCAASEKCCTNVCGLQSCVAAR). 17 cysteine pairs are disulfide-bonded: Cys36/Cys69, Cys52/Cys73, Cys56/Cys68, Cys62/Cys78, Cys120/Cys150, Cys124/Cys143, Cys132/Cys161, Cys211/Cys267, Cys303/Cys355, Cys310/Cys338, Cys330/Cys351, Cys363/Cys413, Cys372/Cys396, Cys388/Cys409, Cys421/Cys493, Cys424/Cys495, and Cys435/Cys544. One can recognise a Kazal-like domain in the interval 112–163 (WDGQPVCRCRDRCEKEPSFTCASDGLTYYNRCYMDAEACLRGLHLHVVPCKH). One can recognise an Ig-like C2-type domain in the interval 190–283 (PALYNSPSPQ…GLLRADFPLS (94 aa)). 2 BPTI/Kunitz inhibitor domains span residues 289-355 (TTQD…QQAC) and 363-413 (CALP…EDAC). The NTR domain occupies 413-544 (CPVPRTPPCR…IVELLEKKAC (132 aa)). A glycan (N-linked (GlcNAc...) asparagine) is linked at Asn497.

The protein belongs to the WFIKKN family. In terms of tissue distribution, preferentially expressed in the developing inner ear and the dorsal neural tube.

It is found in the secreted. Protease-inhibitor that contains multiple distinct protease inhibitor domains. Probably has serine protease- and metalloprotease-inhibitor activity. This chain is WAP, Kazal, immunoglobulin, Kunitz and NTR domain-containing protein 1 (Wfikkn1), found in Rattus norvegicus (Rat).